Reading from the N-terminus, the 205-residue chain is Phosphoenolpyruvate guanylyltransferase (205 aa).

Phosphoenolpyruvate-binding residues include threonine 138, glycine 154, and serine 157.

It belongs to the CofC family.

The catalysed reaction is phosphoenolpyruvate + GTP + H(+) = enolpyruvoyl-2-diphospho-5'-guanosine + diphosphate. The protein operates within cofactor biosynthesis; coenzyme F420 biosynthesis. Guanylyltransferase that catalyzes the activation of phosphoenolpyruvate (PEP) as enolpyruvoyl-2-diphospho-5'-guanosine, via the condensation of PEP with GTP. It is involved in the biosynthesis of coenzyme F420, a hydride carrier cofactor. The sequence is that of Phosphoenolpyruvate guanylyltransferase from Chloroflexus aurantiacus (strain ATCC 29364 / DSM 637 / Y-400-fl).